The following is an 839-amino-acid chain: DNA gyrase subunit A (839 aa).

A Topo IIA-type catalytic domain is found at 46–510 (LPDARDGLKP…ISEDIDDEDL (465 aa)). The O-(5'-phospho-DNA)-tyrosine intermediate role is filled by Tyr134. Residues 537 to 543 (QHRGGVG) carry the GyrA-box motif.

It belongs to the type II topoisomerase GyrA/ParC subunit family. Heterotetramer, composed of two GyrA and two GyrB chains. In the heterotetramer, GyrA contains the active site tyrosine that forms a transient covalent intermediate with DNA, while GyrB binds cofactors and catalyzes ATP hydrolysis.

The protein localises to the cytoplasm. The enzyme catalyses ATP-dependent breakage, passage and rejoining of double-stranded DNA.. Its function is as follows. A type II topoisomerase that negatively supercoils closed circular double-stranded (ds) DNA in an ATP-dependent manner to modulate DNA topology and maintain chromosomes in an underwound state. Negative supercoiling favors strand separation, and DNA replication, transcription, recombination and repair, all of which involve strand separation. Also able to catalyze the interconversion of other topological isomers of dsDNA rings, including catenanes and knotted rings. Type II topoisomerases break and join 2 DNA strands simultaneously in an ATP-dependent manner. This is DNA gyrase subunit A from Mycoplasma pneumoniae (strain ATCC 29342 / M129 / Subtype 1) (Mycoplasmoides pneumoniae).